Here is a 70-residue protein sequence, read N- to C-terminus: Large ribosomal subunit protein bL31 (70 aa).

Zn(2+) is bound by residues cysteine 16, cysteine 18, cysteine 37, and cysteine 40.

This sequence belongs to the bacterial ribosomal protein bL31 family. Type A subfamily. In terms of assembly, part of the 50S ribosomal subunit. It depends on Zn(2+) as a cofactor.

Functionally, binds the 23S rRNA. The protein is Large ribosomal subunit protein bL31 of Shewanella frigidimarina (strain NCIMB 400).